Here is a 364-residue protein sequence, read N- to C-terminus: Protein Wnt-16 (364 aa).

The N-terminal stretch at 1-29 (MDRAALLALPSLCALWAAVLSLLPCGTQG) is a signal peptide. Intrachain disulfides connect cysteine 81–cysteine 92, cysteine 138–cysteine 146, and cysteine 148–cysteine 167. Asparagine 142 is a glycosylation site (N-linked (GlcNAc...) asparagine). An N-linked (GlcNAc...) asparagine glycan is attached at asparagine 188. 8 cysteine pairs are disulfide-bonded: cysteine 220–cysteine 234, cysteine 222–cysteine 229, cysteine 293–cysteine 324, cysteine 309–cysteine 319, cysteine 323–cysteine 363, cysteine 339–cysteine 354, cysteine 341–cysteine 351, and cysteine 346–cysteine 347. Serine 226 carries the O-palmitoleoyl serine; by PORCN lipid modification. The N-linked (GlcNAc...) asparagine glycan is linked to asparagine 310.

Belongs to the Wnt family. In terms of processing, palmitoleoylation is required for efficient binding to frizzled receptors. Depalmitoleoylation leads to Wnt signaling pathway inhibition.

The protein resides in the secreted. Its subcellular location is the extracellular space. It is found in the extracellular matrix. In terms of biological role, ligand for members of the frizzled family of seven transmembrane receptors. Probable developmental protein. May be a signaling molecule which affects the development of discrete regions of tissues. Is likely to signal over only few cell diameters. In Mus musculus (Mouse), this protein is Protein Wnt-16 (Wnt16).